The primary structure comprises 476 residues: Protein DETOXIFICATION 3 (476 aa).

The next 12 helical transmembrane spans lie at 35–55, 66–86, 117–137, 146–166, 185–205, 208–228, 260–280, 289–309, 331–351, 370–390, 402–422, and 433–453; these read AAPMAAVTIAQYLLPVISVMV, GVALATSFTNVSGFSILFGLA, IPICVLISVLWIYIEKLLISL, VAGSYALWLIPALFAHAFFIP, LTTLLFHIPVCWAFVYAFGLG, GAAMAISVSFWFYVVILSCYV, AAMVCLEWWLFELLILCSGLL, VLSICLTTASLHYVIPGGVAA, VLAGLCLWLVESAFFSTLLFT, VANLTPLLCLSFILDGFTAVL, IGALNNVVAYYLVGAPVGVYL, and LWCGVVVGSAVQAIILAFVTA.

The protein belongs to the multi antimicrobial extrusion (MATE) (TC 2.A.66.1) family.

The protein localises to the membrane. In Arabidopsis thaliana (Mouse-ear cress), this protein is Protein DETOXIFICATION 3.